A 265-amino-acid chain; its full sequence is Orphan methyltransferase M.BamHII (265 aa).

The protein belongs to the N(4)/N(6)-methyltransferase family. N(4) subfamily.

The catalysed reaction is a 2'-deoxycytidine in DNA + S-adenosyl-L-methionine = an N(4)-methyl-2'-deoxycytidine in DNA + S-adenosyl-L-homocysteine + H(+). In terms of biological role, a beta subtype methylase, recognizes the double-stranded sequence 5'-GGATCC-3', methylates C-? on both strands. No endonuclease has been identified for this methylase, although it is speculated it might protect against BamHI. This chain is Orphan methyltransferase M.BamHII (bamHIIM), found in Bacillus amyloliquefaciens (Bacillus velezensis).